The sequence spans 809 residues: Leucine--tRNA ligase (809 aa).

Residues 40-50 (PYPSGRIHMGH) carry the 'HIGH' region motif. The short motif at 579–583 (KMSKS) is the 'KMSKS' region element. Lysine 582 lines the ATP pocket.

The protein belongs to the class-I aminoacyl-tRNA synthetase family.

The protein localises to the cytoplasm. It catalyses the reaction tRNA(Leu) + L-leucine + ATP = L-leucyl-tRNA(Leu) + AMP + diphosphate. The polypeptide is Leucine--tRNA ligase (Campylobacter jejuni subsp. doylei (strain ATCC BAA-1458 / RM4099 / 269.97)).